A 53-amino-acid polypeptide reads, in one-letter code: MAVPKKRTSTSKKRIRKNIWKKKGYWTALKAFSLGKSLSTGNSKSFFVQQTNK.

It belongs to the bacterial ribosomal protein bL32 family.

It localises to the plastid. Its subcellular location is the chloroplast. This chain is Large ribosomal subunit protein bL32c, found in Coffea arabica (Arabian coffee).